The primary structure comprises 404 residues: Cysteine desulfurase IscS (404 aa).

Pyridoxal 5'-phosphate-binding positions include 75–76, asparagine 155, glutamine 183, and 203–205; these read AT and SGH. The residue at position 206 (lysine 206) is an N6-(pyridoxal phosphate)lysine. Threonine 243 serves as a coordination point for pyridoxal 5'-phosphate. Cysteine 328 serves as the catalytic Cysteine persulfide intermediate. A [2Fe-2S] cluster-binding site is contributed by cysteine 328.

The protein belongs to the class-V pyridoxal-phosphate-dependent aminotransferase family. NifS/IscS subfamily. In terms of assembly, homodimer. Forms a heterotetramer with IscU, interacts with other sulfur acceptors. Requires pyridoxal 5'-phosphate as cofactor.

It is found in the cytoplasm. The catalysed reaction is (sulfur carrier)-H + L-cysteine = (sulfur carrier)-SH + L-alanine. Its pathway is cofactor biosynthesis; iron-sulfur cluster biosynthesis. In terms of biological role, master enzyme that delivers sulfur to a number of partners involved in Fe-S cluster assembly, tRNA modification or cofactor biosynthesis. Catalyzes the removal of elemental sulfur and selenium atoms from cysteine and selenocysteine to produce alanine. Functions as a sulfur delivery protein for Fe-S cluster synthesis onto IscU, an Fe-S scaffold assembly protein, as well as other S acceptor proteins. Also functions as a selenium delivery protein in the pathway for the biosynthesis of selenophosphate. This Salmonella schwarzengrund (strain CVM19633) protein is Cysteine desulfurase IscS.